Here is a 309-residue protein sequence, read N- to C-terminus: Probable WRKY transcription factor 26 (309 aa).

Residues 1–24 (MGSFDRQRAVPKFKTATPSPLPLS) are disordered. The WRKY 1 DNA-binding region spans 111 to 176 (SSNKTSDDGY…YKGSHNHPKP (66 aa)). Positions 142, 147, 171, and 173 each coordinate Zn(2+). The interval 167–210 (YKGSHNHPKPQSTKRSSSTAIAAHQNSSNGDGKDIGEDETEAKR) is disordered. Over residues 175 to 196 (KPQSTKRSSSTAIAAHQNSSNG) the composition is skewed to polar residues. The segment covering 197–210 (DGKDIGEDETEAKR) has biased composition (basic and acidic residues). A DNA-binding region (WRKY 2) is located at residues 228–293 (SDIDILDDGY…YEGKHKHQIP (66 aa)). Zn(2+)-binding residues include Cys259, Cys264, His288, and His290.

This sequence belongs to the WRKY group I family. As to quaternary structure, interacts with VQ10.

Its subcellular location is the nucleus. In terms of biological role, transcription factor. Interacts specifically with the W box (5'-(T)TGAC[CT]-3'), a frequently occurring elicitor-responsive cis-acting element. Functions with WRKY25 and WRKY33 as positive regulator of plant thermotolerance by partially participating in ethylene-response signal transduction pathway. In Arabidopsis thaliana (Mouse-ear cress), this protein is Probable WRKY transcription factor 26 (WRKY26).